We begin with the raw amino-acid sequence, 476 residues long: MAISAPAACSSSSRILCSYSSPSPSLCPAISTSGKLKTLTLSSSFLPSYSLTTTSASQSTRRSFTVRAARGKFERKKPHVNIGTIGHVDHGKTTLTAALTMALASIGSSVAKKYDEIDAAPEERARGITINTATVEYETENRHYAHVDCPGHADYVKNMITGAAQMDGAILVVSGADGPMPQTKEHILLAKQVGVPDMVVFLNKEDQVDDAELLELVELEVRELLSSYEFNGDDIPIISGSALLAVETLTENPKVKRGDNKWVDKIYELMDAVDDYIPIPQRQTELPFLLAVEDVFSITGRGTVATGRVERGTVKVGETVDLVGLRETRSYTVTGVEMFQKILDEALAGDNVGLLLRGIQKADIQRGMVLAKPGSITPHTKFEAIIYVLKKEEGGRHSPFFAGYRPQFYMRTTDVTGKVTKIMNDKDEESKMVMPGDRVKIVVELIVPVACEQGMRFAIREGGKTVGAGVIGTILE.

The transit peptide at 1-67 directs the protein to the chloroplast; that stretch reads MAISAPAACS…QSTRRSFTVR (67 aa). The tr-type G domain maps to 77–281; sequence KPHVNIGTIG…AVDDYIPIPQ (205 aa). The tract at residues 86 to 93 is G1; that stretch reads GHVDHGKT. 86–93 contributes to the GTP binding site; that stretch reads GHVDHGKT. Phosphothreonine is present on T94. The segment at 127-131 is G2; the sequence is GITIN. The segment at 148–151 is G3; it reads DCPG. GTP is bound by residues 148 to 152 and 203 to 206; these read DCPGH and NKED. The G4 stretch occupies residues 203–206; sequence NKED. A G5 region spans residues 241-243; that stretch reads SAL.

It belongs to the TRAFAC class translation factor GTPase superfamily. Classic translation factor GTPase family. EF-Tu/EF-1A subfamily. Interacts with PI5K2. Interacts with APD2.

The protein resides in the plastid. It localises to the chloroplast. Its function is as follows. This protein promotes the GTP-dependent binding of aminoacyl-tRNA to the A-site of ribosomes during protein biosynthesis. The protein is Elongation factor Tu, chloroplastic (TUFA) of Arabidopsis thaliana (Mouse-ear cress).